Reading from the N-terminus, the 143-residue chain is Large ribosomal subunit protein uL11 (143 aa).

This sequence belongs to the universal ribosomal protein uL11 family. Part of the ribosomal stalk of the 50S ribosomal subunit. Interacts with L10 and the large rRNA to form the base of the stalk. L10 forms an elongated spine to which L12 dimers bind in a sequential fashion forming a multimeric L10(L12)X complex. One or more lysine residues are methylated.

In terms of biological role, forms part of the ribosomal stalk which helps the ribosome interact with GTP-bound translation factors. This chain is Large ribosomal subunit protein uL11, found in Leptothrix cholodnii (strain ATCC 51168 / LMG 8142 / SP-6) (Leptothrix discophora (strain SP-6)).